A 298-amino-acid polypeptide reads, in one-letter code: MQDFSSLLLKLQEYWKNQGCLVIQPYDIPAGAGTFHPATLLRSLDKKPWNVAYVAPSRRPTDGRYGENPNRLGSYYQFQVVIKPSPSNIQELYLKSLEVLGINLNEHDIRFVEDNWESPTLGAWGLGWEVWLDGMEVTQFTYFQQVGGISCNPIPVEITYGLERLAMYVQKVENILEIEWAKKDNESVRYAQVHLESEYEFSKYHFEVASVKRLLEMFKNAQTEALHCLENKLPLPAYDWVVLCSHFFNILDARKAISVAERQNYILQIRDLAKGCAILYKGQEEEREERLKNALSKA.

The protein belongs to the class-II aminoacyl-tRNA synthetase family. Tetramer of two alpha and two beta subunits.

It localises to the cytoplasm. The enzyme catalyses tRNA(Gly) + glycine + ATP = glycyl-tRNA(Gly) + AMP + diphosphate. The protein is Glycine--tRNA ligase alpha subunit of Helicobacter acinonychis (strain Sheeba).